The sequence spans 473 residues: Siroheme synthase 1 (473 aa).

The tract at residues 1–204 (MDYFPIFCQL…NDHVQADQHV (204 aa)) is precorrin-2 dehydrogenase /sirohydrochlorin ferrochelatase. Residues 22–23 (EI) and 43–44 (CE) each bind NAD(+). S128 carries the phosphoserine modification. Residues 216 to 473 (GEVVLVGAGP…KVTECVAHVG (258 aa)) form a uroporphyrinogen-III C-methyltransferase region. P225 contributes to the S-adenosyl-L-methionine binding site. The Proton acceptor role is filled by D248. K270 functions as the Proton donor in the catalytic mechanism. S-adenosyl-L-methionine is bound by residues 301–303 (GGD), I306, 331–332 (TA), M382, and G411.

The protein in the N-terminal section; belongs to the precorrin-2 dehydrogenase / sirohydrochlorin ferrochelatase family. In the C-terminal section; belongs to the precorrin methyltransferase family.

It carries out the reaction uroporphyrinogen III + 2 S-adenosyl-L-methionine = precorrin-2 + 2 S-adenosyl-L-homocysteine + H(+). It catalyses the reaction precorrin-2 + NAD(+) = sirohydrochlorin + NADH + 2 H(+). The catalysed reaction is siroheme + 2 H(+) = sirohydrochlorin + Fe(2+). Its pathway is cofactor biosynthesis; adenosylcobalamin biosynthesis; precorrin-2 from uroporphyrinogen III: step 1/1. It functions in the pathway cofactor biosynthesis; adenosylcobalamin biosynthesis; sirohydrochlorin from precorrin-2: step 1/1. It participates in porphyrin-containing compound metabolism; siroheme biosynthesis; precorrin-2 from uroporphyrinogen III: step 1/1. The protein operates within porphyrin-containing compound metabolism; siroheme biosynthesis; siroheme from sirohydrochlorin: step 1/1. Its pathway is porphyrin-containing compound metabolism; siroheme biosynthesis; sirohydrochlorin from precorrin-2: step 1/1. Its function is as follows. Multifunctional enzyme that catalyzes the SAM-dependent methylations of uroporphyrinogen III at position C-2 and C-7 to form precorrin-2 via precorrin-1. Then it catalyzes the NAD-dependent ring dehydrogenation of precorrin-2 to yield sirohydrochlorin. Finally, it catalyzes the ferrochelation of sirohydrochlorin to yield siroheme. The polypeptide is Siroheme synthase 1 (Yersinia pestis (strain Pestoides F)).